Here is a 663-residue protein sequence, read N- to C-terminus: ATP-dependent RNA helicase DBP6 (663 aa).

Disordered regions lie at residues 1 to 119 and 153 to 200; these read MFGV…DAME and VHSS…LNSS. Acidic residues-rich tracts occupy residues 39–79 and 88–101; these read VVDD…NSEG and SESE…SESD. Basic and acidic residues-rich tracts occupy residues 102-111 and 168-177; these read VDGKHMKEEL and GSREKEKEEV. A Q motif motif is present at residues 222–250; the sequence is KPFSEFPLSPFMHENLESLGFENAFAVQV. Positions 264–448 constitute a Helicase ATP-binding domain; that stretch reads KLRPDAFGDV…SLDFHNPRLL (185 aa). Residue 277-284 participates in ATP binding; that stretch reads ASTGSGKT. The short motif at 384-387 is the DEAD box element; that stretch reads DEAD. Residues 485-642 form the Helicase C-terminal domain; the sequence is ILAKFLIAQE…DVEVNLKQLI (158 aa).

The protein belongs to the DEAD box helicase family. DDX51/DBP6 subfamily. Associated with pre-ribosomal particles.

It localises to the nucleus. The protein resides in the nucleolus. It carries out the reaction ATP + H2O = ADP + phosphate + H(+). ATP-binding RNA helicase involved in the biogenesis of 60S ribosomal subunits and is required for the normal formation of 25S and 5.8S rRNAs. In Lodderomyces elongisporus (strain ATCC 11503 / CBS 2605 / JCM 1781 / NBRC 1676 / NRRL YB-4239) (Yeast), this protein is ATP-dependent RNA helicase DBP6 (DBP6).